Here is a 172-residue protein sequence, read N- to C-terminus: MDRAEKRELVTGLNEAFGNAGSVVVAHYAGITVAQMNDLRSKMRAAGGTVKVAKNRLAKIALQGTDSASIIDLFKGQTLIAYSEDPIAAPKVASDFAKGNDKLVILGGAMGTTSLNADGVKALATLPSLDELRAKLVGMIATPATRIAQIVNAPAASVARVIGAYARKDEAA.

Belongs to the universal ribosomal protein uL10 family. As to quaternary structure, part of the ribosomal stalk of the 50S ribosomal subunit. The N-terminus interacts with L11 and the large rRNA to form the base of the stalk. The C-terminus forms an elongated spine to which L12 dimers bind in a sequential fashion forming a multimeric L10(L12)X complex.

Forms part of the ribosomal stalk, playing a central role in the interaction of the ribosome with GTP-bound translation factors. The sequence is that of Large ribosomal subunit protein uL10 from Mesorhizobium japonicum (strain LMG 29417 / CECT 9101 / MAFF 303099) (Mesorhizobium loti (strain MAFF 303099)).